The following is a 286-amino-acid chain: Beta-lactamase SHV-5 (286 aa).

The first 21 residues, 1–21 (MRYIRLCIISLLATLPLAVHA), serve as a signal peptide directing secretion. Serine 66 acts as the Acyl-ester intermediate in catalysis. The cysteines at positions 73 and 119 are disulfide-linked. Catalysis depends on glutamate 164, which acts as the Proton acceptor. 230–232 (KTG) provides a ligand contact to substrate.

It belongs to the class-A beta-lactamase family.

It catalyses the reaction a beta-lactam + H2O = a substituted beta-amino acid. Its function is as follows. SHV enzymes hydrolyze broad spectrum cephalosporins notably cefotaxime and ceftazidime. SHV-5 causes particularly high levels of resistance to aztreonam and ceftazidime. This chain is Beta-lactamase SHV-5 (bla), found in Klebsiella pneumoniae.